The primary structure comprises 109 residues: Acylphosphatase (109 aa).

The 88-residue stretch at 22 to 109 (RLRARVEGVV…GEFSSFDVVY (88 aa)) folds into the Acylphosphatase-like domain. Catalysis depends on residues arginine 37 and asparagine 55.

Belongs to the acylphosphatase family.

It carries out the reaction an acyl phosphate + H2O = a carboxylate + phosphate + H(+). This chain is Acylphosphatase (acyP), found in Arthrobacter sp. (strain FB24).